The sequence spans 297 residues: MSLSGLITALATPFRADGALDPDGWQRLLHLQLEGGVHGVVVAGSTGEAATLTDAEYDQLLASAVERIGGRIPVMAGTGLSGTAKTIEQTRRAAALGASHALVVTPPYVRPTQAGLIAHYRAVADQGGLPVVLYNVPGRTGCDMQPETVAELASHPNIVGIKEAVGDTGRVQALLALRSAQFAVLSGDDGTAARSIRAGIDGLISVGSNVLPGAYRRMCELAAAHDHEATESWDGRLQPFHEFCGVEPNPIPVKALLRRIGIGHDLRLPLLPLSAVHHPAADHLAGDIAALEALSSH.

T46 contributes to the pyruvate binding site. Y134 serves as the catalytic Proton donor/acceptor. K162 acts as the Schiff-base intermediate with substrate in catalysis. I204 lines the pyruvate pocket.

This sequence belongs to the DapA family. Homotetramer; dimer of dimers.

The protein resides in the cytoplasm. The catalysed reaction is L-aspartate 4-semialdehyde + pyruvate = (2S,4S)-4-hydroxy-2,3,4,5-tetrahydrodipicolinate + H2O + H(+). It functions in the pathway amino-acid biosynthesis; L-lysine biosynthesis via DAP pathway; (S)-tetrahydrodipicolinate from L-aspartate: step 3/4. Its function is as follows. Catalyzes the condensation of (S)-aspartate-beta-semialdehyde [(S)-ASA] and pyruvate to 4-hydroxy-tetrahydrodipicolinate (HTPA). The chain is 4-hydroxy-tetrahydrodipicolinate synthase from Stenotrophomonas maltophilia (strain R551-3).